The chain runs to 49 residues: Large ribosomal subunit protein bL33 (49 aa).

It belongs to the bacterial ribosomal protein bL33 family.

The protein is Large ribosomal subunit protein bL33 of Carboxydothermus hydrogenoformans (strain ATCC BAA-161 / DSM 6008 / Z-2901).